The following is a 594-amino-acid chain: APOBEC1 complementation factor (594 aa).

RRM domains are found at residues 56–134, 136–218, and 231–303; these read CEIF…ASVD, CRLF…WAEP, and KILY…LAKP. The required for nuclear localization stretch occupies residues 360–409; that stretch reads HFPATKGHLSNRAIIRAPSVREIYMNVPVGAAGVRGLGGRGYLAYTGLGR. A Phosphothreonine modification is found at T499.

In terms of assembly, part of the apolipoprotein B mRNA editing complex with APOBEC1. Interacts with TNPO2; TNPO2 may be responsible for transport of A1CF into the nucleus. Interacts with SYNCRIP. Interacts with CELF2/CUGBP2. Interacts with RBM47. In terms of tissue distribution, widely expressed with highest levels in brain, liver, pancreas, colon and spleen.

The protein localises to the nucleus. It localises to the endoplasmic reticulum. It is found in the cytoplasm. Essential component of the apolipoprotein B mRNA editing enzyme complex which is responsible for the postranscriptional editing of a CAA codon for Gln to a UAA codon for stop in APOB mRNA. Binds to APOB mRNA and is probably responsible for docking the catalytic subunit, APOBEC1, to the mRNA to allow it to deaminate its target cytosine. The complex also protects the edited APOB mRNA from nonsense-mediated decay. The polypeptide is APOBEC1 complementation factor (A1CF) (Homo sapiens (Human)).